A 416-amino-acid chain; its full sequence is Glutamyl-tRNA reductase (416 aa).

Residues Thr49–Arg52, Ser105, Glu110–Gln112, and Gln116 each bind substrate. The active-site Nucleophile is the Cys50. Residue Gly185–Ile190 coordinates NADP(+).

It belongs to the glutamyl-tRNA reductase family. As to quaternary structure, homodimer.

The enzyme catalyses (S)-4-amino-5-oxopentanoate + tRNA(Glu) + NADP(+) = L-glutamyl-tRNA(Glu) + NADPH + H(+). Its pathway is porphyrin-containing compound metabolism; protoporphyrin-IX biosynthesis; 5-aminolevulinate from L-glutamyl-tRNA(Glu): step 1/2. Catalyzes the NADPH-dependent reduction of glutamyl-tRNA(Glu) to glutamate 1-semialdehyde (GSA). This Shewanella baltica (strain OS223) protein is Glutamyl-tRNA reductase.